A 139-amino-acid chain; its full sequence is Putative pre-16S rRNA nuclease (139 aa).

Belongs to the YqgF nuclease family.

It is found in the cytoplasm. Could be a nuclease involved in processing of the 5'-end of pre-16S rRNA. The protein is Putative pre-16S rRNA nuclease of Caldanaerobacter subterraneus subsp. tengcongensis (strain DSM 15242 / JCM 11007 / NBRC 100824 / MB4) (Thermoanaerobacter tengcongensis).